Here is a 705-residue protein sequence, read N- to C-terminus: Forkhead box protein P1 (705 aa).

Positions 1–19 are enriched in polar residues; the sequence is MMQESGSETKSNGSAIQNG. A disordered region spans residues 1-41; sequence MMQESGSETKSNGSAIQNGSSGGNHLLECGALRDTRSNGEA. S113 carries the post-translational modification Phosphoserine. 2 disordered regions span residues 267 to 286 and 291 to 326; these read HTAE…TSTC and APSK…EHPH. 2 stretches are compositionally biased toward polar residues: residues 276–286 and 291–311; these read NHSSLDLTSTC and APSK…QLSV. Basic and acidic residues predominate over residues 314–326; the sequence is PKRESLSHEEHPH. K315 participates in a covalent cross-link: Glycyl lysine isopeptide (Lys-Gly) (interchain with G-Cter in SUMO2). Residues 334–359 form a C2H2-type zinc finger; that stretch reads GVCKWPGCEAVCDDFPAFLKHLNSEH. Residues 376–397 form a leucine-zipper region; it reads VQQLELQLAKDKERLQAMMTHL. Glycyl lysine isopeptide (Lys-Gly) (interchain with G-Cter in SUMO2) cross-links involve residues K400 and K405. Residues 410–414 form a CTBP1-binding region; the sequence is PLNLV. Over residues 418–431 the composition is skewed to polar residues; that stretch reads TLSKSASEASPQSL. The segment at 418 to 450 is disordered; sequence TLSKSASEASPQSLPHTPTTPTAPLTPVTQGPS. Residues 432 to 446 show a composition bias toward low complexity; the sequence is PHTPTTPTAPLTPVT. K470 participates in a covalent cross-link: Glycyl lysine isopeptide (Lys-Gly) (interchain with G-Cter in SUMO2). A DNA-binding region (fork-head) is located at residues 493–583; it reads RPPFTYASLI…PQKISGNPSL (91 aa). The interval 639 to 705 is disordered; that stretch reads EHTNSNESDS…EDEPVNEDME (67 aa). Over residues 640–651 the composition is skewed to polar residues; the sequence is HTNSNESDSSPG. T681 carries the phosphothreonine modification. Residue S686 is modified to Phosphoserine. A compositionally biased stretch (acidic residues) spans 695 to 705; the sequence is YEDEPVNEDME.

As to quaternary structure, forms homodimers and heterodimers with FOXP2 and FOXP4. Dimerization is required for DNA-binding. Self-associates. Interacts with CTBP1. Interacts with NCOR2 and AR. Interacts with FOXP2. Interacts with TBR1. Interacts with AURKA; this interaction facilitates the phosphorylation of FOXP1, which suppresses the expression of FBXL7. Interacts with ZMYM2. In terms of tissue distribution, isoform 5 is specifically expressed in embryonic stem cells. Highest expression in the lung, brain, and spleen. Lower expression in heart, skeletal muscle, kidney, small intestine (isoform 3 not present) and liver.

Its subcellular location is the nucleus. Transcriptional repressor. Can act with CTBP1 to synergistically repress transcription but CTPBP1 is not essential. Plays an important role in the specification and differentiation of lung epithelium. Acts cooperatively with FOXP4 to regulate lung secretory epithelial cell fate and regeneration by restricting the goblet cell lineage program; the function may involve regulation of AGR2. Essential transcriptional regulator of B-cell development. Involved in regulation of cardiac muscle cell proliferation. Involved in the columnar organization of spinal motor neurons. Promotes the formation of the lateral motor neuron column (LMC) and the preganglionic motor column (PGC) and is required for respective appropriate motor axon projections. The segment-appropriate generation of spinal cord motor columns requires cooperation with other Hox proteins. Can regulate PITX3 promoter activity; may promote midbrain identity in embryonic stem cell-derived dopamine neurons by regulating PITX3. Negatively regulates the differentiation of T follicular helper cells T(FH)s. Involved in maintenance of hair follicle stem cell quiescence; the function probably involves regulation of FGF18. Represses transcription of various pro-apoptotic genes and cooperates with NF-kappa B-signaling in promoting B-cell expansion by inhibition of caspase-dependent apoptosis. Binds to CSF1R promoter elements and is involved in regulation of monocyte differentiation and macrophage functions; repression of CSF1R in monocytes seems to involve NCOR2 as corepressor. Involved in endothelial cell proliferation, tube formation and migration indicative for a role in angiogenesis; the role in neovascularization seems to implicate suppression of SEMA5B. Can negatively regulate androgen receptor signaling. Acts as a transcriptional activator of the FBXL7 promoter; this activity is regulated by AURKA. In terms of biological role, involved in transcriptional regulation in embryonic stem cells (ESCs). Stimulates expression of transcription factors that are required for pluripotency and decreases expression of differentiation-associated genes. Has distinct DNA-binding specifities as compared to the canonical form and preferentially binds DNA with the sequence 5'-CGATACAA-3' (or closely related sequences). Promotes ESC self-renewal and pluripotency. This is Forkhead box protein P1 (Foxp1) from Mus musculus (Mouse).